The sequence spans 621 residues: MDFDAIVIGGGHAGIEAALALSRLNFKTLMITQNLDTIGKLSCNPAIGGLAKGNMVREIDALGGEMGRIIDFSMIQFRVLNKSRGPAVQAPRAQADKLMYQTKAKETLERQDNLDLFQDTVVDFLLNSMRNEIEGVVTERGNKFRSSVVVLTTGTFLRGKIFIGEYRADMGRLAEFSAYGLDKTLLGLGFEMGRLKTGTPARIHKKSVDFSKTEVQFGDSDIIPFSFSNGKLDKSQLSCYVTYTNKKTHEIISENMHLSPLYSGEIVGNGPRYCPSIEDKIVKFKDKDRHQIFIEPEGFNTEEMYLNGLSSSLPENIQQKLINSIEGLEHAVITRPGYAVEYDYINPIELYPNLESKRVKGLFIAGQTNGSSGYEEAAAQGLMAGINAALRLQNKKPMILTRTSSYIGVLIDDLVTKGTKEPYRMFTSRAEHRLNLRHDTSDKRLIKIGYDLGLVDEKRYSRYLFKESRVEEIKELLKQRRLSLKDVVDEQLKKHVSKDFYHILKDPSISLDNLIKIDPSLSDSKVILEQVELDVKYEGYINRQKDLIKRLDNLELVKLPFDFNYEIIEGLSREAREKFSKIQPATLAQASRIPGIRSTDITVLLIYFSNPKNKVVINFSL.

FAD is bound at residue 9–14 (GGGHAG). 270–284 (GPRYCPSIEDKIVKF) lines the NAD(+) pocket.

Belongs to the MnmG family. As to quaternary structure, homodimer. Heterotetramer of two MnmE and two MnmG subunits. It depends on FAD as a cofactor.

It localises to the cytoplasm. Functionally, NAD-binding protein involved in the addition of a carboxymethylaminomethyl (cmnm) group at the wobble position (U34) of certain tRNAs, forming tRNA-cmnm(5)s(2)U34. The sequence is that of tRNA uridine 5-carboxymethylaminomethyl modification enzyme MnmG from Borreliella burgdorferi (strain ATCC 35210 / DSM 4680 / CIP 102532 / B31) (Borrelia burgdorferi).